A 717-amino-acid polypeptide reads, in one-letter code: Inhibitor of nuclear factor kappa-B kinase subunit epsilon (717 aa).

Positions 9–315 (WHTDDLLGQG…LQRTVIHVFS (307 aa)) constitute a Protein kinase domain. 15 to 23 (LGQGATASV) contacts ATP. Lys30 participates in a covalent cross-link: Glycyl lysine isopeptide (Lys-Gly) (interchain with G-Cter in ubiquitin). Position 38 (Lys38) interacts with ATP. Asp135 (proton acceptor) is an active-site residue. Ser172 is subject to Phosphoserine; by autocatalysis and IKKB. Residue Lys231 forms a Glycyl lysine isopeptide (Lys-Gly) (interchain with G-Cter in SUMO1) linkage. The tract at residues 385-650 (SSDTPKGLAF…AQESLNKIFD (266 aa)) is interaction with DDX3X. Lys403 is covalently cross-linked (Glycyl lysine isopeptide (Lys-Gly) (interchain with G-Cter in ubiquitin)). Residues 452–473 (LQDTCQQTLEVTRTALLYLSSS) are leucine-zipper. Thr503 carries the phosphothreonine modification. Ser665 is modified (phosphoserine).

It belongs to the protein kinase superfamily. Ser/Thr protein kinase family. I-kappa-B kinase subfamily. In terms of assembly, homodimer. Interacts with MAVS/IPS1. Interacts (via protein kinase domain) with TTLL12 (via N-terminus); the interaction prevents MAVS binding to IKBKE. Interacts with the adapter proteins AZI2/NAP1, TANK and TBKBP1/SINTBAD. Interacts with SIKE1. Interacts with TICAM1/TRIF, IRF3 and RIGI; interactions are disrupted by the interaction between IKBKE and SIKE1. Interacts with TOPORS; induced by DNA damage. Interacts with CYLD, IKBKB, IKBKG and MYD88. Interacts with IFIH1. Interacts with DDX3X; the interaction may be induced upon virus infection. Interacts with TRIM6 (via SPRY box). Interacts with unanchored K48-linked polyubiquitin chains; this leads to IKBKE activation. Interacts with TBK1. Interacts with FKBP5. Sumoylation by TOPORS upon DNA damage is required for protection of cells against DNA damage-induced cell death. Desumoylated by SENP1. Post-translationally, autophosphorylated and phosphorylated by IKBKB/IKKB. Phosphorylation at Ser-172 is enhanced by the interaction with DDX3X. Phosphorylated at Thr-503 upon IFN activation. In terms of processing, 'Lys-63'-linked polyubiquitinated at Lys-30 and Lys-403 by TRAF2:BIRC2 and TRAF2:BIRC3 complexes. Ubiquitination is induced by LPS, TNFA and interleukin-1 and required for full kinase activity and KF-kappa-B pathway activation. As to expression, expressed in bone marrow-derived macrophages and at low levels in liver and white adipose tissue (at protein level). Detected in muscle and lung.

Its subcellular location is the cytoplasm. The protein localises to the nucleus. It localises to the PML body. The enzyme catalyses L-seryl-[I-kappa-B protein] + ATP = O-phospho-L-seryl-[I-kappa-B protein] + ADP + H(+). Its activity is regulated as follows. Kinase activity is inhibited competitively by amlexanox. Serine/threonine kinase that plays an essential role in regulating inflammatory responses to viral infection, through the activation of the type I IFN, NF-kappa-B and STAT signaling. Also involved in TNFA and inflammatory cytokines, like Interleukin-1, signaling. Following activation of viral RNA sensors, such as RIG-I-like receptors, associates with DDX3X and phosphorylates interferon regulatory factors (IRFs), IRF3 and IRF7, as well as DDX3X. This activity allows subsequent homodimerization and nuclear translocation of the IRF3 leading to transcriptional activation of pro-inflammatory and antiviral genes including IFNB. In order to establish such an antiviral state, IKBKE forms several different complexes whose composition depends on the type of cell and cellular stimuli. Thus, several scaffolding molecules including IPS1/MAVS, TANK, AZI2/NAP1 or TBKBP1/SINTBAD can be recruited to the IKBKE-containing-complexes. Activated by polyubiquitination in response to TNFA and interleukin-1, regulates the NF-kappa-B signaling pathway through, at least, the phosphorylation of CYLD. Phosphorylates inhibitors of NF-kappa-B thus leading to the dissociation of the inhibitor/NF-kappa-B complex and ultimately the degradation of the inhibitor. In addition, is also required for the induction of a subset of ISGs which displays antiviral activity, may be through the phosphorylation of STAT1 at 'Ser-708'. Phosphorylation of STAT1 at 'Ser-708' also seems to promote the assembly and DNA binding of ISGF3 (STAT1:STAT2:IRF9) complexes compared to GAF (STAT1:STAT1) complexes, in this way regulating the balance between type I and type II IFN responses. Protects cells against DNA damage-induced cell death. Also plays an important role in energy balance regulation by sustaining a state of chronic, low-grade inflammation in obesity, wich leads to a negative impact on insulin sensitivity. Phosphorylates AKT1. The sequence is that of Inhibitor of nuclear factor kappa-B kinase subunit epsilon (Ikbke) from Mus musculus (Mouse).